The following is a 123-amino-acid chain: Large ribosomal subunit protein bL12 (123 aa).

This sequence belongs to the bacterial ribosomal protein bL12 family. As to quaternary structure, homodimer. Part of the ribosomal stalk of the 50S ribosomal subunit. Forms a multimeric L10(L12)X complex, where L10 forms an elongated spine to which 2 to 4 L12 dimers bind in a sequential fashion. Binds GTP-bound translation factors.

In terms of biological role, forms part of the ribosomal stalk which helps the ribosome interact with GTP-bound translation factors. Is thus essential for accurate translation. This is Large ribosomal subunit protein bL12 from Desulfotalea psychrophila (strain LSv54 / DSM 12343).